We begin with the raw amino-acid sequence, 220 residues long: UPF0319 protein YccT (220 aa).

The first 20 residues, 1 to 20 (MKTGALTTFLALCLPVTVFA), serve as a signal peptide directing secretion.

It belongs to the UPF0319 family.

This Salmonella dublin (strain CT_02021853) protein is UPF0319 protein YccT.